The following is a 477-amino-acid chain: PTS system glucose-specific EIICB component (477 aa).

The Cytoplasmic segment spans residues 1–14 (MFKNAFANLQKVGK). One can recognise a PTS EIIC type-1 domain in the interval 1–388 (MFKNAFANLQ…LDLKTPGRED (388 aa)). The helical transmembrane segment at 15-35 (SLMLPVSVLPIAGILLGVGSA) threads the bilayer. Residues 36 to 50 (NFSWLPAVVSHVMAE) lie on the Periplasmic side of the membrane. The chain crosses the membrane as a helical span at residues 51 to 71 (AGGSVFANMPLIFAIGVALGF). Residues 72 to 79 (TNNDGVSA) lie on the Cytoplasmic side of the membrane. A helical membrane pass occupies residues 80–100 (LAAVVAYGIMVKTMAVVAPLV). Residues 101 to 111 (LHLPAEEIAAK) lie on the Periplasmic side of the membrane. Residues 112–132 (HLADTGVLGGIISGAIAAYMF) traverse the membrane as a helical segment. Over 133-151 (NRFYRIKLPEYLGFFAGKR) the chain is Cytoplasmic. Residues 152–172 (FVPIISGLAAIFTGVVLSFVW) traverse the membrane as a helical segment. Over 173-190 (PPIGTAIQAFSQWAAYQN) the chain is Periplasmic. The chain crosses the membrane as a helical span at residues 191–211 (PVVAFGIYGFIERCLVPFGLH). Residues 212-248 (HIWNVPFQMQIGEYTNAAGQVFHGDIPRYMAGDPTAG) are Cytoplasmic-facing. A helical membrane pass occupies residues 249–269 (MLSGGFLFKMYGLPAAAIAIW). Residues 270–279 (HSAKPENRAK) lie on the Periplasmic side of the membrane. The chain crosses the membrane as a helical span at residues 280-300 (VGGIMISAALTSFLTGITEPI). The Cytoplasmic segment spans residues 301-309 (EFSFMFVAP). Residues 310 to 330 (ILYIIHAILAGLAFPICILLG) form a helical membrane-spanning segment. Over 331–355 (MRDGTSFSHGLIDFIVLSGNSSKLW) the chain is Periplasmic. A helical transmembrane segment spans residues 356–376 (LFPIVGAGYAIVYYTVFRVLI). Over 377–477 (KALDLKTPGR…TEMDEYIRNS (101 aa)) the chain is Cytoplasmic. Residues 399-477 (SEMAPALVAA…TEMDEYIRNS (79 aa)) form the PTS EIIB type-1 domain. C421 serves as the catalytic Phosphocysteine intermediate; for EIIB activity. C421 carries the phosphocysteine modification.

The protein resides in the cell inner membrane. The catalysed reaction is N(pros)-phospho-L-histidyl-[protein] + D-glucose(out) = D-glucose 6-phosphate(in) + L-histidyl-[protein]. Its function is as follows. The phosphoenolpyruvate-dependent sugar phosphotransferase system (sugar PTS), a major carbohydrate active transport system, catalyzes the phosphorylation of incoming sugar substrates concomitantly with their translocation across the cell membrane. The enzyme II complex composed of PtsG and Crr is involved in glucose transport. Also functions as a chemoreceptor monitoring the environment for changes in sugar concentration. It can also phosphorylate mannose, methyl alpha-glucoside and 2-deoxy-glucose. This Salmonella typhimurium (strain LT2 / SGSC1412 / ATCC 700720) protein is PTS system glucose-specific EIICB component (ptsG).